The sequence spans 61 residues: Japonicin-1CDYa (61 aa).

Positions 1 to 22 (MFTLKKSLLLLFFLGVINVSLC) are cleaved as a signal peptide. The propeptide occupies 23-45 (EEERDADEEERRDDPEERDVEVE). Cysteines 55 and 61 form a disulfide.

It belongs to the frog skin active peptide (FSAP) family. Brevinin subfamily. As to expression, expressed by the skin glands.

The protein localises to the secreted. Its function is as follows. Antimicrobial peptide. Has low activity against the Gram-positive bacterium S.aureus (MIC&gt;100 uM) and the Gram-negative bacterium E.coli (MIC=25 uM). Lacks hemolytic activity against human erythrocytes. The sequence is that of Japonicin-1CDYa from Rana dybowskii (Dybovsky's frog).